Here is a 229-residue protein sequence, read N- to C-terminus: Large ribosomal subunit protein uL1 (229 aa).

It belongs to the universal ribosomal protein uL1 family. Part of the 50S ribosomal subunit.

Its function is as follows. Binds directly to 23S rRNA. The L1 stalk is quite mobile in the ribosome, and is involved in E site tRNA release. In terms of biological role, protein L1 is also a translational repressor protein, it controls the translation of the L11 operon by binding to its mRNA. The protein is Large ribosomal subunit protein uL1 of Gemmatimonas aurantiaca (strain DSM 14586 / JCM 11422 / NBRC 100505 / T-27).